A 597-amino-acid chain; its full sequence is MFRAQQNAFDDAVAKATDENLTSENWEYILDVCDKVAAEESGAKDAVAALIKRLAHRNANVQLYTLELGNALAQNCGPKIHRELASRSFTDALLRLANDRNTHQQVKAKILERMQEWTEMFASNPDFGIMEQAYMKLKTQNPNLQPPSKPGKREITEADRQKEEEELQMALALSIREKPSTAPHPQAESSASAAAAATTPTGAASAGQAQPAASQAVPSGTSAATVSRVRALFDFQPSEPGELQFRKGDVIAVLESVYKDWWKGSLRGQTGIFPLNYVEKLPDPTVEELQREAQMEAEVFGQIKNVEKLLTLLSTRSSEPNVQDNEEITALYHSTLAIRPKLIELIGKYSQKKDEFTQLNEKFIKARRDYEALLEASMSHPAQPQYGRPGQPQYPYPGPGAPMGYPPGGPQPDQRYFSPRPQGHMYPPTSQSPGPRNHTPPAAAPYQQAPSHPPAQPQQHTAPDAYPPQHHRPESTYDHPQELSTSVYDSPVEQRPPYPGAQIPAAIHQHFQQQQQQQQDYSPSVYSPDESKPPGTQQVPYPATPAANQPPPMHQPPPVPGAAAAPTPYPVNAPGASYQAYKPPQGGPASNPASFYQ.

In terms of domain architecture, VHS spans 16–145 (ATDENLTSEN…KLKTQNPNLQ (130 aa)). 2 disordered regions span residues 140 to 164 (QNPN…QKEE) and 178 to 218 (KPST…QAVP). Positions 151–163 (GKREITEADRQKE) are enriched in basic and acidic residues. The 20-residue stretch at 162 to 181 (KEEEELQMALALSIREKPST) folds into the UIM domain. A compositionally biased stretch (low complexity) spans 189–218 (SSASAAAAATTPTGAASAGQAQPAASQAVP). In terms of domain architecture, SH3 spans 224 to 283 (ATVSRVRALFDFQPSEPGELQFRKGDVIAVLESVYKDWWKGSLRGQTGIFPLNYVEKLPD). Positions 380-597 (HPAQPQYGRP…PASNPASFYQ (218 aa)) are disordered. Residues 381–391 (PAQPQYGRPGQ) are compositionally biased toward low complexity. Positions 392-410 (PQYPYPGPGAPMGYPPGGP) are enriched in pro residues. Residues 440-450 (PPAAAPYQQAP) are compositionally biased toward low complexity. A compositionally biased stretch (basic and acidic residues) spans 471-481 (HRPESTYDHPQ). Residues 548-560 (NQPPPMHQPPPVP) are compositionally biased toward pro residues.

This sequence belongs to the STAM family. In terms of assembly, component of the ESCRT-0 complex composed of HSE1 and VPS27.

Its subcellular location is the endosome membrane. Functionally, component of the ESCRT-0 complex which is the sorting receptor for ubiquitinated cargo proteins at the multivesicular body (MVB). The protein is Class E vacuolar protein-sorting machinery protein hse1 (hse1) of Aspergillus terreus (strain NIH 2624 / FGSC A1156).